A 294-amino-acid polypeptide reads, in one-letter code: Probable endonuclease 4 (294 aa).

Zn(2+)-binding residues include histidine 78, histidine 118, glutamate 157, aspartate 191, histidine 194, histidine 228, aspartate 241, histidine 243, and glutamate 273.

Belongs to the AP endonuclease 2 family. Requires Zn(2+) as cofactor.

The catalysed reaction is Endonucleolytic cleavage to 5'-phosphooligonucleotide end-products.. Endonuclease IV plays a role in DNA repair. It cleaves phosphodiester bonds at apurinic or apyrimidinic (AP) sites, generating a 3'-hydroxyl group and a 5'-terminal sugar phosphate. In Streptomyces coelicolor (strain ATCC BAA-471 / A3(2) / M145), this protein is Probable endonuclease 4.